We begin with the raw amino-acid sequence, 324 residues long: tRNA dimethylallyltransferase (324 aa).

Gly17–Thr24 lines the ATP pocket. Thr19–Thr24 is a binding site for substrate. 4 interaction with substrate tRNA regions span residues Asp42 to Leu45, Gln166 to Arg170, Arg251 to Arg256, and Lys284 to Arg291.

The protein belongs to the IPP transferase family. In terms of assembly, monomer. Requires Mg(2+) as cofactor.

The catalysed reaction is adenosine(37) in tRNA + dimethylallyl diphosphate = N(6)-dimethylallyladenosine(37) in tRNA + diphosphate. Its function is as follows. Catalyzes the transfer of a dimethylallyl group onto the adenine at position 37 in tRNAs that read codons beginning with uridine, leading to the formation of N6-(dimethylallyl)adenosine (i(6)A). This chain is tRNA dimethylallyltransferase, found in Burkholderia ambifaria (strain MC40-6).